A 482-amino-acid chain; its full sequence is Serine decarboxylase 1 (482 aa).

Positions glutamate 36 to arginine 55 are disordered. Histidine 200 contributes to the substrate binding site. Lysine 312 is modified (N6-(pyridoxal phosphate)lysine).

This sequence belongs to the group II decarboxylase family. Requires pyridoxal 5'-phosphate as cofactor.

It carries out the reaction L-serine + H(+) = ethanolamine + CO2. Its function is as follows. Catalyzes the biosynthesis of ethanolamine from serine. Decarboxylation of free serine is the major source of ethanolamine production in plants and ethanolamine metabolism is crucial for the synthesis of choline, phosphatidylethanolamine (PE) and phosphatidylcholine (PC), and thus for plant growth. This Oryza sativa subsp. japonica (Rice) protein is Serine decarboxylase 1 (SDC1).